A 913-amino-acid chain; its full sequence is Alanine--tRNA ligase (913 aa).

Zn(2+)-binding residues include H608, H612, C711, and H715.

It belongs to the class-II aminoacyl-tRNA synthetase family. The cofactor is Zn(2+).

The protein localises to the cytoplasm. It catalyses the reaction tRNA(Ala) + L-alanine + ATP = L-alanyl-tRNA(Ala) + AMP + diphosphate. Its function is as follows. Catalyzes the attachment of alanine to tRNA(Ala) in a two-step reaction: alanine is first activated by ATP to form Ala-AMP and then transferred to the acceptor end of tRNA(Ala). Also edits incorrectly charged Ser-tRNA(Ala) and Gly-tRNA(Ala) via its editing domain. This chain is Alanine--tRNA ligase, found in Methanocorpusculum labreanum (strain ATCC 43576 / DSM 4855 / Z).